We begin with the raw amino-acid sequence, 568 residues long: Urease subunit alpha (568 aa).

The region spanning 130–568 (GGIDTHIHFI…LPMAQRYFLF (439 aa)) is the Urease domain. The Ni(2+) site is built by H135, H137, and K218. K218 carries the post-translational modification N6-carboxylysine. H220 is a substrate binding site. Ni(2+)-binding residues include H247 and H273. H321 serves as the catalytic Proton donor. Ni(2+) is bound at residue D361.

Belongs to the metallo-dependent hydrolases superfamily. Urease alpha subunit family. Heterotrimer of UreA (gamma), UreB (beta) and UreC (alpha) subunits. Three heterotrimers associate to form the active enzyme. Ni cation is required as a cofactor. Carboxylation allows a single lysine to coordinate two nickel ions.

It localises to the cytoplasm. The enzyme catalyses urea + 2 H2O + H(+) = hydrogencarbonate + 2 NH4(+). The protein operates within nitrogen metabolism; urea degradation; CO(2) and NH(3) from urea (urease route): step 1/1. The chain is Urease subunit alpha from Burkholderia orbicola (strain MC0-3).